A 164-amino-acid polypeptide reads, in one-letter code: Inner membrane assembly complex subunit 17 (164 aa).

A mitochondrion-targeting transit peptide spans 1-28 (MIKTAKISTLRLAITRNARNLSFTTLVR). Residues 29–97 (SPEVDNSKIK…NEVPLKRFTR (69 aa)) are Mitochondrial matrix-facing. The helical transmembrane segment at 98–118 (PLWIFILMASTFYLGAHLVWW) threads the bilayer. At 119 to 164 (KLAYEKKEVELKHKVDSLETTLKDVMKEKATGPTPCNNKKSWYKFW) the chain is on the mitochondrial intermembrane side. Positions 121–149 (AYEKKEVELKHKVDSLETTLKDVMKEKAT) form a coiled coil.

Belongs to the INA17 family. In terms of assembly, component of the inner membrane assembly (INA) complex, composed of INA17 and INA22. Interacts with a subset of F(1)F(0)-ATP synthase subunits of the F(1)-domain and the peripheral stalk.

Its subcellular location is the mitochondrion inner membrane. Functionally, component of the INA complex (INAC) that promotes the biogenesis of mitochondrial F(1)F(0)-ATP synthase. INAC facilitates the assembly of the peripheral stalk and promotes the assembly of the catalytic F(1)-domain with the membrane-embedded F(0)-domain. This is Inner membrane assembly complex subunit 17 from Candida glabrata (strain ATCC 2001 / BCRC 20586 / JCM 3761 / NBRC 0622 / NRRL Y-65 / CBS 138) (Yeast).